The chain runs to 360 residues: Protein MGF 360-1L (360 aa).

Belongs to the asfivirus MGF 360 family.

Its function is as follows. Plays a role in virus cell tropism, and may be required for efficient virus replication in macrophages. The chain is Protein MGF 360-1L from African swine fever virus (strain Badajoz 1971 Vero-adapted) (Ba71V).